The following is a 346-amino-acid chain: Cytosolic sulfotransferase 17 (346 aa).

89-94 (KTGTTW) is a 3'-phosphoadenylyl sulfate binding site. Histidine 151 serves as the catalytic Proton acceptor. 3'-phosphoadenylyl sulfate contacts are provided by residues arginine 173, serine 181, tyrosine 239, and 309 to 311 (RKG).

It belongs to the sulfotransferase 1 family. As to expression, highly expressed in roots, stems and mature leaves. Low expression in young leaves and flowers. Barely detected in siliques.

Its subcellular location is the cytoplasm. It carries out the reaction an aliphatic (Z)-desulfo-glucosinolate + 3'-phosphoadenylyl sulfate = a (Z)-omega-(methylsulfanyl)-N-sulfo-alkylhydroximate S-glucoside + adenosine 3',5'-bisphosphate + H(+). Its activity is regulated as follows. Inhibited by phosphoadenosine 5'-phosphate (PAP). In terms of biological role, sulfotransferase that utilizes 3'-phospho-5'-adenylyl sulfate (PAPS) as sulfonate donor to catalyze the sulfate conjugation of desulfo-glucosinolates (dsGSs), the final step in the biosynthesis of the glucosinolate core structure. Substrate preference is desulfo-benzyl glucosinolate &gt; desulfo-6-methylthiohexyl glucosinolate. Increased specific activity with increasing chain length of desulfo-glucosinolate derived from methionine. Preferred substrate is desulfo-8-methylthiooctyl glucosinolate. This is Cytosolic sulfotransferase 17 (SOT17) from Arabidopsis thaliana (Mouse-ear cress).